A 29-amino-acid chain; its full sequence is Cytochrome c oxidase subunit 7A1, mitochondrial (29 aa).

Residues 1–13 show a composition bias toward basic and acidic residues; the sequence is LENRVAEKQKLFQ. Residues 1–29 are disordered; the sequence is LENRVAEKQKLFQEDNGLPVHLKGGATDN.

Belongs to the cytochrome c oxidase VIIa family. Component of the complex IV (CIV, cytochrome c oxidase), a multisubunit enzyme composed of 14 subunits. The complex is composed of a catalytic core of 3 subunits MT-CO1, MT-CO2 and MT-CO3, encoded in the mitochondrial DNA, and 11 supernumerary subunits COX4I1 (or COX4I2), COX5A, COX5B, COX6A2 (or COX6A1), COX6B1 (or COX6B2), COX6C, COX7A1 (or COX7A2), COX7B, COX7C, COX8B and NDUFA4, which are encoded in the nuclear genome. The complex exists as a monomer or a dimer and forms supercomplexes (SCs) in the inner mitochondrial membrane with NADH-ubiquinone oxidoreductase (complex I, CI) and ubiquinol-cytochrome c oxidoreductase (cytochrome b-c1 complex, complex III, CIII), resulting in different assemblies (supercomplex SCI(1)III(2)IV(1) and megacomplex MCI(2)III(2)IV(2)).

The protein localises to the mitochondrion inner membrane. It participates in energy metabolism; oxidative phosphorylation. Its function is as follows. Component of the mitochondrial respiratory complex IV (CIV, also named cytochrome c oxidase complex), the last enzyme in the mitochondrial electron transport chain which drives oxidative phosphorylation. The CIV complex is the component of the respiratory chain that catalyzes the reduction of oxygen to water. Acts as an assembly factor that specifically drives the homodimerization of CIV complexes, mediating the formation of mitochondrial respiratory supercomplexes (respirasomes) containing two CIV: supercomplxes with two molecules of CIV show improved activity. Despite being highly expressed in brown adipose tissue, not required for thermogenesis. The chain is Cytochrome c oxidase subunit 7A1, mitochondrial (COX7A1) from Ovis aries (Sheep).